The following is a 174-amino-acid chain: ATP-dependent protease subunit HslV (174 aa).

T2 is a catalytic residue. Residues G157, C160, and T163 each contribute to the Na(+) site.

This sequence belongs to the peptidase T1B family. HslV subfamily. A double ring-shaped homohexamer of HslV is capped on each side by a ring-shaped HslU homohexamer. The assembly of the HslU/HslV complex is dependent on binding of ATP.

The protein localises to the cytoplasm. It catalyses the reaction ATP-dependent cleavage of peptide bonds with broad specificity.. Allosterically activated by HslU binding. In terms of biological role, protease subunit of a proteasome-like degradation complex believed to be a general protein degrading machinery. The sequence is that of ATP-dependent protease subunit HslV from Shewanella putrefaciens (strain CN-32 / ATCC BAA-453).